Here is a 364-residue protein sequence, read N- to C-terminus: BTB/POZ and TAZ domain-containing protein 2 (364 aa).

In terms of domain architecture, BTB spans 34 to 106; sequence SDVEIVTSDN…LYSSSLTEDE (73 aa). Positions 203 to 212 match the Nuclear localization signal motif; sequence RKKRRRRHRK. The TAZ-type zinc-finger motif lies at 215 to 316; that stretch reads DLYMQLSEAM…PDSCRVPLCR (102 aa). Positions 327–350 are caM-binding; the sequence is KMGEDTKWKLLVTRVVSAKAMTSL.

As to quaternary structure, interacts with CUL3A. Interacts with GTE11/BET10 through the BTB domain. As to expression, preferentially expressed in young leaves and roots.

The protein localises to the nucleus. It localises to the cytoplasm. It participates in protein modification; protein ubiquitination. May act as a substrate-specific adapter of an E3 ubiquitin-protein ligase complex (CUL3-RBX1-BTB) which mediates the ubiquitination and subsequent proteasomal degradation of target proteins. Plays a key role as a component of the TAC1-mediated telomerase activation pathway certainly by targeting a telomerase repressor to degradation. Seems to occupy an integral position in a complex signaling network that perceives, integrates, and responds to multiple, and sometimes competing, signals. Enhances responses to auxin in postgermination and vegetative development. Also negatively regulates ABA- and sugar-mediated inhibition of the germination. Essential for female and male gametophyte development. This Arabidopsis thaliana (Mouse-ear cress) protein is BTB/POZ and TAZ domain-containing protein 2 (BT2).